Reading from the N-terminus, the 143-residue chain is Large ribosomal subunit protein uL11 (143 aa).

It belongs to the universal ribosomal protein uL11 family. As to quaternary structure, part of the ribosomal stalk of the 50S ribosomal subunit. Interacts with L10 and the large rRNA to form the base of the stalk. L10 forms an elongated spine to which L12 dimers bind in a sequential fashion forming a multimeric L10(L12)X complex. Post-translationally, one or more lysine residues are methylated.

In terms of biological role, forms part of the ribosomal stalk which helps the ribosome interact with GTP-bound translation factors. In Methylibium petroleiphilum (strain ATCC BAA-1232 / LMG 22953 / PM1), this protein is Large ribosomal subunit protein uL11.